Consider the following 372-residue polypeptide: Anhydro-N-acetylmuramic acid kinase (372 aa).

13–20 contributes to the ATP binding site; the sequence is GTSMDGID.

Belongs to the anhydro-N-acetylmuramic acid kinase family.

It catalyses the reaction 1,6-anhydro-N-acetyl-beta-muramate + ATP + H2O = N-acetyl-D-muramate 6-phosphate + ADP + H(+). The protein operates within amino-sugar metabolism; 1,6-anhydro-N-acetylmuramate degradation. It functions in the pathway cell wall biogenesis; peptidoglycan recycling. Catalyzes the specific phosphorylation of 1,6-anhydro-N-acetylmuramic acid (anhMurNAc) with the simultaneous cleavage of the 1,6-anhydro ring, generating MurNAc-6-P. Is required for the utilization of anhMurNAc either imported from the medium or derived from its own cell wall murein, and thus plays a role in cell wall recycling. In Rhizobium johnstonii (strain DSM 114642 / LMG 32736 / 3841) (Rhizobium leguminosarum bv. viciae), this protein is Anhydro-N-acetylmuramic acid kinase.